The chain runs to 458 residues: Argininosuccinate lyase (458 aa).

It belongs to the lyase 1 family. Argininosuccinate lyase subfamily.

The protein localises to the cytoplasm. It carries out the reaction 2-(N(omega)-L-arginino)succinate = fumarate + L-arginine. Its pathway is amino-acid biosynthesis; L-arginine biosynthesis; L-arginine from L-ornithine and carbamoyl phosphate: step 3/3. In Lachnospira eligens (strain ATCC 27750 / DSM 3376 / VPI C15-48 / C15-B4) (Eubacterium eligens), this protein is Argininosuccinate lyase.